Consider the following 307-residue polypeptide: NAD kinase 2 (307 aa).

Asp77 serves as the catalytic Proton acceptor. Residues 77 to 78 (DG), 151 to 152 (NE), Asp181, 192 to 197 (TAYALS), and Asn251 contribute to the NAD(+) site.

It belongs to the NAD kinase family. A divalent metal cation is required as a cofactor.

The protein localises to the cytoplasm. The catalysed reaction is NAD(+) + ATP = ADP + NADP(+) + H(+). In terms of biological role, involved in the regulation of the intracellular balance of NAD and NADP, and is a key enzyme in the biosynthesis of NADP. Catalyzes specifically the phosphorylation on 2'-hydroxyl of the adenosine moiety of NAD to yield NADP. This is NAD kinase 2 from Thermosynechococcus vestitus (strain NIES-2133 / IAM M-273 / BP-1).